The sequence spans 431 residues: NADH-quinone oxidoreductase chain 1 (431 aa).

NAD(+) is bound at residue 54 to 63 (GRGGAGFPTG). Position 167–214 (167–214 (GAGAYICGEETALLESLEGKKGMPRMKPPFPAGAGLYGCPTTVNNVES)) interacts with FMN. The [4Fe-4S] cluster site is built by Cys-346, Cys-349, Cys-352, and Cys-392.

Belongs to the complex I 51 kDa subunit family. As to quaternary structure, NDH-1 is composed of at least 14 different subunits, Nqo1 to Nqo14. The complex has a L-shaped structure, with the hydrophobic arm (subunits Nqo7, Nqo8, Nqo10 to Nqo14) embedded in the inner membrane and the hydrophilic peripheral arm (subunits Nqo1 to Nqo6, Nqo9) protruding into the bacterial cytoplasm. The hydrophilic domain contains all the redox centers. Requires FMN as cofactor. [4Fe-4S] cluster is required as a cofactor.

The protein resides in the cell inner membrane. It carries out the reaction a quinone + NADH + 5 H(+)(in) = a quinol + NAD(+) + 4 H(+)(out). Its function is as follows. NDH-1 shuttles electrons from NADH, via FMN and iron-sulfur (Fe-S) centers, to quinones in the respiratory chain. The immediate electron acceptor for the enzyme in this species is believed to be ubiquinone. Couples the redox reaction to proton translocation (for every two electrons transferred, four hydrogen ions are translocated across the cytoplasmic membrane), and thus conserves the redox energy in a proton gradient. The chain is NADH-quinone oxidoreductase chain 1 (nqo1) from Paracoccus denitrificans.